Consider the following 179-residue polypeptide: ATP synthase subunit delta (179 aa).

The protein belongs to the ATPase delta chain family. As to quaternary structure, F-type ATPases have 2 components, F(1) - the catalytic core - and F(0) - the membrane proton channel. F(1) has five subunits: alpha(3), beta(3), gamma(1), delta(1), epsilon(1). F(0) has three main subunits: a(1), b(2) and c(10-14). The alpha and beta chains form an alternating ring which encloses part of the gamma chain. F(1) is attached to F(0) by a central stalk formed by the gamma and epsilon chains, while a peripheral stalk is formed by the delta and b chains.

The protein localises to the cell membrane. Its function is as follows. F(1)F(0) ATP synthase produces ATP from ADP in the presence of a proton or sodium gradient. F-type ATPases consist of two structural domains, F(1) containing the extramembraneous catalytic core and F(0) containing the membrane proton channel, linked together by a central stalk and a peripheral stalk. During catalysis, ATP synthesis in the catalytic domain of F(1) is coupled via a rotary mechanism of the central stalk subunits to proton translocation. This protein is part of the stalk that links CF(0) to CF(1). It either transmits conformational changes from CF(0) to CF(1) or is implicated in proton conduction. The protein is ATP synthase subunit delta of Staphylococcus saprophyticus subsp. saprophyticus (strain ATCC 15305 / DSM 20229 / NCIMB 8711 / NCTC 7292 / S-41).